Consider the following 134-residue polypeptide: Profilin-4 (134 aa).

A disulfide bridge links cysteine 13 with cysteine 118. An Involved in PIP2 interaction motif is present at residues 84–100 (AVIRGKKGSGGITIKKT). The residue at position 114 (threonine 114) is a Phosphothreonine.

It belongs to the profilin family. Occurs in many kinds of cells as a complex with monomeric actin in a 1:1 ratio. Post-translationally, phosphorylated by MAP kinases.

It is found in the cytoplasm. The protein resides in the cytoskeleton. Its function is as follows. Binds to actin and affects the structure of the cytoskeleton. At high concentrations, profilin prevents the polymerization of actin, whereas it enhances it at low concentrations. This Olea europaea (Common olive) protein is Profilin-4.